Here is a 179-residue protein sequence, read N- to C-terminus: O-acetyl-ADP-ribose deacetylase (179 aa).

The region spanning 1 to 175 (MTSRLQVIQG…LYARLLTQQG (175 aa)) is the Macro domain. Residues 11-12 (DI), Asn-25, 33-35 (GVD), and 122-126 (STGVY) each bind substrate. The active-site Proton acceptor is the Asp-35.

It belongs to the MacroD-type family. YmdB subfamily. In terms of assembly, homodimer. Interacts with RNase III.

It carries out the reaction 3''-O-acetyl-ADP-D-ribose + H2O = ADP-D-ribose + acetate + H(+). The enzyme catalyses 2''-O-acetyl-ADP-D-ribose + H2O = ADP-D-ribose + acetate + H(+). In terms of biological role, deacetylates O-acetyl-ADP ribose to yield ADP-ribose and free acetate. Down-regulates ribonuclease 3 (RNase III) activity. Acts by interacting directly with the region of the ribonuclease that is required for dimerization/activation. This chain is O-acetyl-ADP-ribose deacetylase, found in Salmonella gallinarum (strain 287/91 / NCTC 13346).